The sequence spans 178 residues: Caveolin-1 (178 aa).

Serine 2 is modified (N-acetylserine). At serine 2 the chain carries Phosphoserine. The segment at 2–94 (SGGKYVDSEG…WKASFTTFTV (93 aa)) is required for homooligomerization. The Cytoplasmic segment spans residues 2–104 (SGGKYVDSEG…TKYWFYRLLS (103 aa)). Lysine 5 carries the N6-acetyllysine; alternate modification. A Glycyl lysine isopeptide (Lys-Gly) (interchain with G-Cter in ubiquitin); alternate cross-link involves residue lysine 5. At tyrosine 6 the chain carries Phosphotyrosine. The residue at position 9 (serine 9) is a Phosphoserine. Position 14 is a phosphotyrosine; by ABL1 and INSR (tyrosine 14). Tyrosine 25 carries the post-translational modification Phosphotyrosine. Glycyl lysine isopeptide (Lys-Gly) (interchain with G-Cter in ubiquitin) cross-links involve residues lysine 26, lysine 30, lysine 39, lysine 47, and lysine 57. The segment at 82–94 (DGIWKASFTTFTV) is interaction with CAVIN3. The segment at residues 105–125 (TIFGIPMALIWGIYFAILSFL) is an intramembrane region (helical). Residues 126–178 (HIWAVVPCIKSFLIEIQCISRVYSIYVHTFCDPLFEAIGKIFSNIRISTQKEI) lie on the Cytoplasmic side of the membrane. The segment at 131 to 142 (VPCIKSFLIEIQ) is interacts with SPRY1, SPRY2, SPRY3 and SPRY4. 3 S-palmitoyl cysteine lipidation sites follow: cysteine 133, cysteine 143, and cysteine 156. The tract at residues 149-160 (SIYVHTFCDPLF) is interacts with SPRY1, SPRY2, and SPRY4. The interval 167 to 178 (FSNIRISTQKEI) is interacts with SPRY1, SPRY2, SPRY3 and SPRY4.

Belongs to the caveolin family. In terms of assembly, homooligomer. Interacts (via the N-terminus) with DPP4; the interaction is direct. Forms a stable heterooligomeric complex with CAV2 that targets to lipid rafts and drives caveolae formation. Interacts with BMX, BTK, CTNNB1, CDH1, GLIPR2, JUP, NOSTRIN, SNAP25 and STX1A. Interacts with SLC7A9. Interacts with TGFBR1. Interacts with CTNNB1, CDH1 and JUP. Interacts with PACSIN2; this interaction induces membrane tubulation. Interacts with CAVIN3 (via leucine-zipper domain) in a cholesterol-sensitive manner. Interacts with EHD2 in a cholesterol-dependent manner. Interacts with CAVIN1. Forms a ternary complex with UBXN6 and VCP; mediates CAV1 targeting to lysosomes for degradation. Interacts with ABCG1; this interaction regulates ABCG1-mediated cholesterol efflux. Interacts with NEU3; this interaction enhances NEU3 sialidase activity within caveola. Interacts (via C-terminus) with SPRY1, SPRY2 (via C-terminus), SPRY3, and SPRY4. Interacts with IGFBP5; this interaction allows trafficking of IGFBP5 from the plasma membrane to the nucleus. In terms of processing, the N-terminus of both isoforms are blocked. Phosphorylated at Tyr-14 by ABL1 in response to oxidative stress. Post-translationally, ubiquitinated. Undergo monoubiquitination and multi- and/or polyubiquitination. Monoubiquitination of N-terminal lysines promotes integration in a ternary complex with UBXN6 and VCP which promotes oligomeric CAV1 targeting to lysosomes for degradation. Ubiquitinated by ZNRF1; leading to degradation and modulation of the TLR4-mediated immune response. In terms of tissue distribution, adipose tissue, lung, heart, skeletal muscle, stomach, small bowel, kidney, spleen and testis (at protein level).

It localises to the golgi apparatus membrane. The protein resides in the cell membrane. Its subcellular location is the membrane. The protein localises to the caveola. It is found in the membrane raft. It localises to the golgi apparatus. The protein resides in the trans-Golgi network. Its function is as follows. May act as a scaffolding protein within caveolar membranes. Forms a stable heterooligomeric complex with CAV2 that targets to lipid rafts and drives caveolae formation. Mediates the recruitment of CAVIN proteins (CAVIN1/2/3/4) to the caveolae. Interacts directly with G-protein alpha subunits and can functionally regulate their activity. Involved in the costimulatory signal essential for T-cell receptor (TCR)-mediated T-cell activation. Its binding to DPP4 induces T-cell proliferation and NF-kappa-B activation in a T-cell receptor/CD3-dependent manner. Recruits CTNNB1 to caveolar membranes and may regulate CTNNB1-mediated signaling through the Wnt pathway. Negatively regulates TGFB1-mediated activation of SMAD2/3 by mediating the internalization of TGFBR1 from membrane rafts leading to its subsequent degradation. Binds 20(S)-hydroxycholesterol (20(S)-OHC). The polypeptide is Caveolin-1 (Cav1) (Mus musculus (Mouse)).